The sequence spans 379 residues: Tryptophan 2,3-dioxygenase (379 aa).

Residues 57–61 and Arg-128 contribute to the substrate site; that span reads FIITH. A heme-binding site is contributed by His-312. A substrate-binding site is contributed by Thr-327.

Belongs to the tryptophan 2,3-dioxygenase family. In terms of assembly, homotetramer. Dimer of dimers. Requires heme as cofactor.

The enzyme catalyses L-tryptophan + O2 = N-formyl-L-kynurenine. It participates in amino-acid degradation; L-tryptophan degradation via kynurenine pathway; L-kynurenine from L-tryptophan: step 1/2. Its pathway is pigment biosynthesis; ommochrome biosynthesis. Heme-dependent dioxygenase that catalyzes the oxidative cleavage of the L-tryptophan (L-Trp) pyrrole ring and converts L-tryptophan to N-formyl-L-kynurenine. Catalyzes the oxidative cleavage of the indole moiety. This Drosophila sechellia (Fruit fly) protein is Tryptophan 2,3-dioxygenase.